The chain runs to 393 residues: Exosome complex component RRP45 (393 aa).

The ARE binding stretch occupies residues 1–268 (MRDTPLSNCE…SEITELINKA (268 aa)).

This sequence belongs to the RNase PH family. As to quaternary structure, component of the RNA exosome complex.

It localises to the cytoplasm. Its subcellular location is the nucleus. The protein localises to the nucleolus. It is found in the nucleoplasm. Its function is as follows. Non-catalytic component of the RNA exosome complex which has 3'-&gt;5' exoribonuclease activity and participates in a multitude of cellular RNA processing and degradation events. In the nucleus, the RNA exosome complex is involved in proper maturation of stable RNA species such as rRNA, snRNA and snoRNA, in the elimination of RNA processing by-products and non-coding 'pervasive' transcripts, such as antisense RNA species and promoter-upstream transcripts (PROMPTs), and of mRNAs with processing defects, thereby limiting or excluding their export to the cytoplasm. In the cytoplasm, the RNA exosome complex is involved in general mRNA turnover and specifically degrades inherently unstable mRNAs containing AU-rich elements (AREs) within their 3' untranslated regions, and in RNA surveillance pathways, preventing translation of aberrant mRNAs. In Danio rerio (Zebrafish), this protein is Exosome complex component RRP45.